We begin with the raw amino-acid sequence, 146 residues long: Thyroid hormone-inducible hepatic protein (146 aa).

Residues 83 to 104 form a disordered region; that stretch reads KVAGSEENGTAETEEVEDESAS. Residues 94 to 104 show a composition bias toward acidic residues; it reads ETEEVEDESAS.

Belongs to the SPOT14 family. Homodimer. Heterodimer with MID1IP1. Interacts with THRB and PLAGL1. In terms of tissue distribution, mainly expressed in tissues that synthesize triglycerides.

It localises to the nucleus. Its subcellular location is the cytoplasm. Functionally, plays a role in the regulation of lipogenesis, especially in lactating mammary gland. Important for the biosynthesis of triglycerides with medium-length fatty acid chains. May modulate lipogenesis by interacting with MID1IP1 and preventing its interaction with ACACA. May function as transcriptional coactivator. May modulate the transcription factor activity of THRB. This Homo sapiens (Human) protein is Thyroid hormone-inducible hepatic protein (THRSP).